The following is a 367-amino-acid chain: Glutamate 5-kinase (367 aa).

ATP is bound at residue Lys-9. The substrate site is built by Ser-49, Asp-136, and Asn-148. ATP contacts are provided by residues 168–169 and 210–216; these read TD and TGGMKSK. In terms of domain architecture, PUA spans 276-350; that stretch reads SGQIEIDAGA…GMQSQQIQAR (75 aa).

The protein belongs to the glutamate 5-kinase family.

The protein resides in the cytoplasm. It carries out the reaction L-glutamate + ATP = L-glutamyl 5-phosphate + ADP. Its pathway is amino-acid biosynthesis; L-proline biosynthesis; L-glutamate 5-semialdehyde from L-glutamate: step 1/2. Functionally, catalyzes the transfer of a phosphate group to glutamate to form L-glutamate 5-phosphate. This is Glutamate 5-kinase from Bacillus anthracis.